The sequence spans 141 residues: Hemoglobin subunit alpha-D (141 aa).

Residues 1–141 enclose the Globin domain; it reads MLTEDDKQLI…VSAVLAEKYR (141 aa). Heme b contacts are provided by His-58 and His-87.

Belongs to the globin family. As to quaternary structure, heterotetramer of two alpha-D chains and two beta chains. Red blood cells.

Its function is as follows. Involved in oxygen transport from the lung to the various peripheral tissues. This Chelonoidis niger (Galapagos giant tortoise) protein is Hemoglobin subunit alpha-D (HBAD).